A 372-amino-acid polypeptide reads, in one-letter code: Alanine dehydrogenase 1 (372 aa).

Histidine 94 is a catalytic residue. NAD(+) is bound at residue 170 to 200; that stretch reads TYVIFGGGVAATNAANVALGLNAKVIIIELN.

The protein belongs to the AlaDH/PNT family.

The catalysed reaction is L-alanine + NAD(+) + H2O = pyruvate + NH4(+) + NADH + H(+). It participates in amino-acid degradation; L-alanine degradation via dehydrogenase pathway; NH(3) and pyruvate from L-alanine: step 1/1. In terms of biological role, may play a role in cell wall synthesis as L-alanine is an important constituent of the peptidoglycan layer. This chain is Alanine dehydrogenase 1 (ald1), found in Staphylococcus aureus (strain USA300).